The following is a 465-amino-acid chain: Catalase cnsD (465 aa).

H39 is an active-site residue. A heme-binding site is contributed by Y331.

Belongs to the catalase family. Requires heme as cofactor.

Its pathway is alkaloid biosynthesis. Functionally, catalase; part of the gene cluster that mediates the biosynthesis of communesins, a prominent class of indole alkaloids with great potential as pharmaceuticals. Communesins are biosynthesized by the coupling of tryptamine and aurantioclavine, two building blocks derived from L-tryptophan. The L-tryptophan decarboxylase cnsB converts L-tryptophan to tryptamine, whereas the tryptophan dimethylallyltransferase cnsF converts L-tryptophan to 4-dimethylallyl tryptophan which is further transformed to aurantioclavine by the aurantioclavine synthase cnsA, probably aided by the catalase cnsD. The cytochrome P450 monooxygenase cnsC catalyzes the heterodimeric coupling between the two different indole moieties, tryptamine and aurantioclavine, to construct vicinal quaternary stereocenters and yield the heptacyclic communesin scaffold. The O-methyltransferase cnsE then methylates the communesin scaffold to produce communesin K, the simplest characterized communesin that contains the heptacyclic core. The dioxygenase cnsJ converts communesin K into communesin I. Acylation to introduce the hexadienyl group at position N16 of communesin I by the acyltransferase cnsK leads to the production of communesin B. The hexadienyl group is produced by the highly reducing polyketide synthase cnsI, before being hydrolytically removed from cnsI by the serine hydrolase cnsH, converted into hexadienyl-CoA by the CoA ligase cnsG, and then transferred to communesin I by cnsK. Surprisingly, cnsK may also be a promiscuous acyltransferase that can tolerate a range of acyl groups, including acetyl-, propionyl-, and butyryl-CoA, which lead to communesins A, G and H respectively. The roles of the alpha-ketoglutarate-dependent dioxygenases cnsM and cnsP have still to be determined. The sequence is that of Catalase cnsD from Penicillium expansum (Blue mold rot fungus).